The sequence spans 640 residues: Chaperone protein DnaK (640 aa).

Threonine 198 carries the post-translational modification Phosphothreonine; by autocatalysis. The segment at 600 to 640 is disordered; it reads KTQGAGAEGGEQPHGEQEAGGAAKGEKVVDADFEEVKDDKK. Over residues 630–640 the composition is skewed to acidic residues; the sequence is ADFEEVKDDKK.

It belongs to the heat shock protein 70 family.

Its function is as follows. Acts as a chaperone. The polypeptide is Chaperone protein DnaK (Citrifermentans bemidjiense (strain ATCC BAA-1014 / DSM 16622 / JCM 12645 / Bem) (Geobacter bemidjiensis)).